A 627-amino-acid polypeptide reads, in one-letter code: MTLEPHYSAKSAASASAFVARSATESSTASTKAAPRKKTYSQSNGIPIRIDNLPPGKTWAQVKYLIGGIIYHTNILQVKMLPPMTSMVPPFITFQSCIVILKNSIDNESLENLLLTLNTYQWDYHDLFVYLLPYTNDSPSLRYPEISDSNNDVRSAPDETKRSISPRYASHVSSVTPQPPSASTPPSQFFSFSPEVSLRKNENITPLPTPVPVPVGVPPLAPPPHGPFSTSMLPMLGAPPGTVPNMQMPYQTTLPSPTAAATAGGPLASPTHYPRRRHFYHQNQSQFQKYMHNSPRNPDTGTGPRLSQQHHLSLRNNKINPSYNEISALYNLNMASNSNNNGNIPTTSTNGDDRALQAKNGGTITPSQTQINHKRLKHIFNEKSFRKQMTNRGMWQLKIINFPPYIPIEFLEKLSESDFNELMNQEKFTVIEIKEKGQLEKFGRLRWTVLKDFIKLKCPKLLRLQERQFLQQQNEASLLNESMDALKISENENTNGSANNSTYTNGGPRTSINNTREFYVGVYEDHEEATLLRFELPEDELEEFNRNLPTTFAQSGNVSDSEGDSKAKYFKVSTIVYNAIVGFHDKELSDLTFESLQDQEYSLGYKIHVMELPPFDEDEFENQRQQF.

Disordered stretches follow at residues 141–187 (LRYP…TPPS) and 490–510 (ENEN…GPRT). Positions 491 to 510 (NENTNGSANNSTYTNGGPRT) are enriched in polar residues. Position 559 is a phosphoserine (Ser559).

This is an uncharacterized protein from Saccharomyces cerevisiae (strain ATCC 204508 / S288c) (Baker's yeast).